Reading from the N-terminus, the 150-residue chain is Cell division protein SepF (150 aa).

The protein belongs to the SepF family. As to quaternary structure, homodimer. Interacts with FtsZ.

The protein localises to the cytoplasm. Its function is as follows. Cell division protein that is part of the divisome complex and is recruited early to the Z-ring. Probably stimulates Z-ring formation, perhaps through the cross-linking of FtsZ protofilaments. Its function overlaps with FtsA. The polypeptide is Cell division protein SepF (Clostridium botulinum (strain ATCC 19397 / Type A)).